The sequence spans 224 residues: Polyadenylate-binding protein 2 (224 aa).

The span at 1–36 (MADEDITLNEDQLLESLEETNGEQETEIATEVEEEG) shows a compositional bias: acidic residues. The segment at 1–40 (MADEDITLNEDQLLESLEETNGEQETEIATEVEEEGSMQI) is disordered. The stretch at 9-74 (NEDQLLESLE…QSEVDKQMAG (66 aa)) forms a coiled coil. The 78-residue stretch at 96–173 (RSVYVGNVDY…RQIKVMSKRT (78 aa)) folds into the RRM domain.

As to quaternary structure, interacts with ZC3H3. As to expression, expressed ubiquitously in all transcriptionally active cells.

Its subcellular location is the nucleus. The protein resides in the cytoplasm. Its function is as follows. Involved in the 3'-end formation of mRNA precursors (pre-mRNA) by the addition of a poly(A) tail of 200-250 nt to the upstream cleavage product. Stimulates poly(A) polymerase (PAPOLA) conferring processivity on the poly(A) tail elongation reaction and also controls the poly(A) tail length. Increases the affinity of poly(A) polymerase for RNA. Binds to poly(A) and to poly(G) with high affinity. May protect the poly(A) tail from degradation. Plays a role in the positive regulation of alpha-1,3 fucosylation, possibly by cooperating with swm which regulates nuclear export of fucosyltransferase FucTA. Involved in germline stem cell transit amplification, differentiation and mitosis-to-meiosis transition. This chain is Polyadenylate-binding protein 2, found in Drosophila melanogaster (Fruit fly).